The following is a 378-amino-acid chain: Queuine tRNA-ribosyltransferase (378 aa).

Catalysis depends on Asp89, which acts as the Proton acceptor. Residues 89 to 93 (DSGGF), Asp143, Gln194, and Gly221 contribute to the substrate site. The RNA binding stretch occupies residues 252–258 (GVGTPAN). Asp271 serves as the catalytic Nucleophile. Residues 276-280 (ARNGR) form an RNA binding; important for wobble base 34 recognition region. Residues Cys309, Cys311, Cys314, and His340 each contribute to the Zn(2+) site.

The protein belongs to the queuine tRNA-ribosyltransferase family. Homodimer. Within each dimer, one monomer is responsible for RNA recognition and catalysis, while the other monomer binds to the replacement base PreQ1. The cofactor is Zn(2+).

It carries out the reaction 7-aminomethyl-7-carbaguanine + guanosine(34) in tRNA = 7-aminomethyl-7-carbaguanosine(34) in tRNA + guanine. It functions in the pathway tRNA modification; tRNA-queuosine biosynthesis. Its function is as follows. Catalyzes the base-exchange of a guanine (G) residue with the queuine precursor 7-aminomethyl-7-deazaguanine (PreQ1) at position 34 (anticodon wobble position) in tRNAs with GU(N) anticodons (tRNA-Asp, -Asn, -His and -Tyr). Catalysis occurs through a double-displacement mechanism. The nucleophile active site attacks the C1' of nucleotide 34 to detach the guanine base from the RNA, forming a covalent enzyme-RNA intermediate. The proton acceptor active site deprotonates the incoming PreQ1, allowing a nucleophilic attack on the C1' of the ribose to form the product. After dissociation, two additional enzymatic reactions on the tRNA convert PreQ1 to queuine (Q), resulting in the hypermodified nucleoside queuosine (7-(((4,5-cis-dihydroxy-2-cyclopenten-1-yl)amino)methyl)-7-deazaguanosine). This chain is Queuine tRNA-ribosyltransferase, found in Lachnoclostridium phytofermentans (strain ATCC 700394 / DSM 18823 / ISDg) (Clostridium phytofermentans).